The primary structure comprises 94 residues: Potassium channel protein kcv (94 aa).

A helical transmembrane segment spans residues 14 to 34 (FMIHLFILAMFVMIYKFFPGG). N-linked (GlcNAc...) asparagine; by host glycosylation occurs at Asn38. A helical membrane pass occupies residues 74–94 (TGAKLCTIAHIVTVFFIVLTL).

This sequence belongs to the two pore domain potassium channel (TC 1.A.1.12) family.

The protein localises to the membrane. Functionally, potassium-selective channel essential in the virus replication cycle. May be involved in preventing multiple infections (Potential). The protein is Potassium channel protein kcv (A250R) of Paramecium bursaria Chlorella virus 1 (PBCV-1).